The chain runs to 455 residues: Phosphoglucosamine mutase (455 aa).

The Phosphoserine intermediate role is filled by serine 103. Residues serine 103, aspartate 243, aspartate 245, and aspartate 247 each contribute to the Mg(2+) site. A Phosphoserine modification is found at serine 103.

It belongs to the phosphohexose mutase family. The cofactor is Mg(2+). Activated by phosphorylation.

The catalysed reaction is alpha-D-glucosamine 1-phosphate = D-glucosamine 6-phosphate. Catalyzes the conversion of glucosamine-6-phosphate to glucosamine-1-phosphate. The sequence is that of Phosphoglucosamine mutase from Halorhodospira halophila (strain DSM 244 / SL1) (Ectothiorhodospira halophila (strain DSM 244 / SL1)).